Reading from the N-terminus, the 196-residue chain is Purpurin (196 aa).

Residues 1–21 form the signal peptide; that stretch reads MKYAQYVFLASIFSAVEYSLA. Disulfide bonds link C24/C182, C90/C196, and C142/C151.

It belongs to the calycin superfamily. Lipocalin family.

The protein resides in the secreted. It localises to the extracellular space. The protein localises to the extracellular matrix. Its subcellular location is the interphotoreceptor matrix. In terms of biological role, may be involved in the transport of retinol between the photoreceptors and the pigmented epithelium. This Gallus gallus (Chicken) protein is Purpurin.